The primary structure comprises 227 residues: Ribonuclease HII (227 aa).

One can recognise an RNase H type-2 domain in the interval 1 to 210; the sequence is MKLAGIDEAG…LKKIEEKLAK (210 aa). A divalent metal cation contacts are provided by Asp-7, Glu-8, and Asp-105.

It belongs to the RNase HII family. The cofactor is Mn(2+). Requires Mg(2+) as cofactor.

Its subcellular location is the cytoplasm. The catalysed reaction is Endonucleolytic cleavage to 5'-phosphomonoester.. Endonuclease that specifically degrades the RNA of RNA-DNA hybrids. The protein is Ribonuclease HII of Thermococcus onnurineus (strain NA1).